The primary structure comprises 92 residues: Putative protein IntG (92 aa).

This sequence belongs to the 'phage' integrase family.

The chain is Putative protein IntG (intG) from Escherichia coli (strain K12).